The sequence spans 502 residues: Probable cytochrome P450 28d1 (502 aa).

Heme is bound at residue cysteine 446.

This sequence belongs to the cytochrome P450 family. It depends on heme as a cofactor.

The protein resides in the endoplasmic reticulum membrane. The protein localises to the microsome membrane. In terms of biological role, may be involved in the metabolism of insect hormones and in the breakdown of synthetic insecticides. The protein is Probable cytochrome P450 28d1 (Cyp28d1) of Drosophila melanogaster (Fruit fly).